Consider the following 218-residue polypeptide: Protein-methionine-sulfoxide reductase heme-binding subunit MsrQ (218 aa).

The next 5 helical transmembrane spans lie at 14–34, 60–80, 86–106, 121–141, and 155–175; these read LVHAAALAPIALLGWQFWQVW, FLLITLAITPLRQLTGQAVVI, LGLYAFFYASVHLAAYLTLDL, PYITVGFAAWLLLMPLAITST, and LHTLIYPIGLLAVLHFWWLVK.

This sequence belongs to the MsrQ family. In terms of assembly, heterodimer of a catalytic subunit (MsrP) and a heme-binding subunit (MsrQ). FMN serves as cofactor. The cofactor is heme b.

It is found in the cell inner membrane. Part of the MsrPQ system that repairs oxidized periplasmic proteins containing methionine sulfoxide residues (Met-O), using respiratory chain electrons. Thus protects these proteins from oxidative-stress damage caused by reactive species of oxygen and chlorine generated by the host defense mechanisms. MsrPQ is essential for the maintenance of envelope integrity under bleach stress, rescuing a wide series of structurally unrelated periplasmic proteins from methionine oxidation. MsrQ provides electrons for reduction to the reductase catalytic subunit MsrP, using the quinone pool of the respiratory chain. This Xanthomonas euvesicatoria pv. vesicatoria (strain 85-10) (Xanthomonas campestris pv. vesicatoria) protein is Protein-methionine-sulfoxide reductase heme-binding subunit MsrQ.